A 235-amino-acid chain; its full sequence is MKAFFAVLAVVSAPFVLGHYTFPDFIEPSGTVTGDWVYVRETQNHYSNGPVTDVTSPEFRCYELDLQNTAGQTQTATVSAGDTVGFKANSAIYHPGYLDVMMSPASPAANSPEAGTGQTWFKIYEEKPQFENGQLVFDTTQQEVTFTIPKSLPSGQYLLRIEQIALHVASSYGGAQFYIGCAQLNVENGGNGTPGPLVSIPGVYTGYEPGILINIYNLPKNFTGYPAPGPAVWQG.

An N-terminal signal peptide occupies residues 1–18 (MKAFFAVLAVVSAPFVLG). Position 19 (histidine 19) interacts with Cu(2+). Serine 29 carries O-linked (Man...) serine glycosylation. A disulfide bond links cysteine 61 and cysteine 181. Histidine 94 lines the Cu(2+) pocket. The O2 site is built by histidine 167 and glutamine 176. A Cu(2+)-binding site is contributed by tyrosine 178. Asparagine 221 carries N-linked (GlcNAc...) asparagine glycosylation.

The protein belongs to the polysaccharide monooxygenase AA9 family. Cu(2+) is required as a cofactor.

Its subcellular location is the secreted. It carries out the reaction [(1-&gt;4)-beta-D-glucosyl]n+m + reduced acceptor + O2 = 4-dehydro-beta-D-glucosyl-[(1-&gt;4)-beta-D-glucosyl]n-1 + [(1-&gt;4)-beta-D-glucosyl]m + acceptor + H2O.. Its function is as follows. Lytic polysaccharide monooxygenase (LPMO) that depolymerizes crystalline and amorphous polysaccharides via the oxidation of scissile alpha- or beta-(1-4)-glycosidic bonds, yielding only C1 oxidation products. Catalysis by LPMOs requires the reduction of the active-site copper from Cu(II) to Cu(I) by a reducing agent and H(2)O(2) or O(2) as a cosubstrate. This Phanerodontia chrysosporium (White-rot fungus) protein is AA9 family lytic polysaccharide monooxygenase D.